The chain runs to 490 residues: Polyamine transporter RMV1 (490 aa).

The span at 1-21 shows a compositional bias: polar residues; the sequence is MTELSSPNLDSASQKPRISTE. Positions 1–38 are disordered; it reads MTELSSPNLDSASQKPRISTENPPPPPPHISIGVTTGD. The next 12 membrane-spanning stretches (helical) occupy residues 53-73, 83-103, 116-136, 160-180, 188-208, 231-248, 273-293, 303-323, 363-383, 386-406, 425-445, and 448-468; these read ITVL…PFGI, LLAI…EALI, GYVV…QGWV, IPIL…TVAL, LSIV…PFVV, GVNW…LNYW, LLLV…AIAL, FADI…QAAA, TPWV…WLSF, IVAA…ITFV, VLGS…IMAF, and LKVA…QPCL.

The protein belongs to the amino acid-polyamine-organocation (APC) superfamily. Polyamine:cation symporter (PHS) (TC 2.A.3.12) family.

It is found in the cell membrane. Its function is as follows. Cell membrane polyamine/proton symporter involved in the polyamine uptake in cells. Possesses high affinity for spermine and spermidine and lower affinity for putrescine. Transports paraquat, a polyamine analog, and thus confers sensitivity to this chemical which is used as a herbicide. The polypeptide is Polyamine transporter RMV1 (RMV1) (Arabidopsis thaliana (Mouse-ear cress)).